The chain runs to 164 residues: Cold-inducible RNA-binding protein (164 aa).

The 79-residue stretch at Gly6–Lys84 folds into the RRM domain. Residues Ala65 to Gly164 are disordered. Residues Tyr93 to Gly118 show a composition bias toward gly residues. Positions Ser155 to Gly164 are enriched in basic and acidic residues.

Interacts with prmt1. Interacts with elavl1/elrA (via RRM3). Associates with ribosomes. Post-translationally, methylated on arginine residues within RGG motifs. Methylation by prmt1 promotes cytoplasmic accumulation.

It is found in the nucleus. The protein localises to the nucleoplasm. It localises to the cytoplasm. Cold-inducible mRNA binding protein. Acts cooperatively with elavl1/elrA to stabilize AU-rich element (ARE)-containing mRNAs by binding to them and inhibiting their deadenylation. Essential for embryonic gastrulation and neural development, acting to maintain the expression of a set of adhesion molecules, and cell movement during embryogenesis. Required for pronephros development. May play a role in hibernation. This chain is Cold-inducible RNA-binding protein, found in Aquarana catesbeiana (American bullfrog).